The primary structure comprises 349 residues: Carbamoyl phosphate synthase small chain (349 aa).

Positions 1–170 are CPSase; sequence MKAKLILENG…KYEISGEGKK (170 aa). The L-glutamine site is built by S45, G218, and G220. The region spanning 170–349 is the Glutamine amidotransferase type-1 domain; that stretch reads KVAIIDFGIK…IFDEFMKYAL (180 aa). The Nucleophile role is filled by C245. Positions 246, 249, 287, 289, and 290 each coordinate L-glutamine. Active-site residues include H327 and E329.

This sequence belongs to the CarA family. In terms of assembly, composed of two chains; the small (or glutamine) chain promotes the hydrolysis of glutamine to ammonia, which is used by the large (or ammonia) chain to synthesize carbamoyl phosphate. Tetramer of heterodimers (alpha,beta)4.

It catalyses the reaction hydrogencarbonate + L-glutamine + 2 ATP + H2O = carbamoyl phosphate + L-glutamate + 2 ADP + phosphate + 2 H(+). It carries out the reaction L-glutamine + H2O = L-glutamate + NH4(+). It participates in amino-acid biosynthesis; L-arginine biosynthesis; carbamoyl phosphate from bicarbonate: step 1/1. The protein operates within pyrimidine metabolism; UMP biosynthesis via de novo pathway; (S)-dihydroorotate from bicarbonate: step 1/3. Functionally, small subunit of the glutamine-dependent carbamoyl phosphate synthetase (CPSase). CPSase catalyzes the formation of carbamoyl phosphate from the ammonia moiety of glutamine, carbonate, and phosphate donated by ATP, constituting the first step of 2 biosynthetic pathways, one leading to arginine and/or urea and the other to pyrimidine nucleotides. The small subunit (glutamine amidotransferase) binds and cleaves glutamine to supply the large subunit with the substrate ammonia. The sequence is that of Carbamoyl phosphate synthase small chain from Clostridium perfringens (strain 13 / Type A).